The chain runs to 176 residues: Co-chaperone protein HscB (176 aa).

In terms of domain architecture, J spans 2 to 74 (DYFTLFGLPA…LMRAEYLLSL (73 aa)).

It belongs to the HscB family. As to quaternary structure, interacts with HscA and stimulates its ATPase activity. Interacts with IscU.

Functionally, co-chaperone involved in the maturation of iron-sulfur cluster-containing proteins. Seems to help targeting proteins to be folded toward HscA. This Escherichia coli O7:K1 (strain IAI39 / ExPEC) protein is Co-chaperone protein HscB.